A 228-amino-acid polypeptide reads, in one-letter code: Octanoyltransferase (228 aa).

In terms of domain architecture, BPL/LPL catalytic spans 31–212 (GETDGILILL…KFSEVFGIHF (182 aa)). Substrate is bound by residues 76–83 (RGGKITFH), 143–145 (AIG), and 156–158 (GIA). Catalysis depends on Cys-174, which acts as the Acyl-thioester intermediate.

This sequence belongs to the LipB family.

Its subcellular location is the cytoplasm. It catalyses the reaction octanoyl-[ACP] + L-lysyl-[protein] = N(6)-octanoyl-L-lysyl-[protein] + holo-[ACP] + H(+). Its pathway is protein modification; protein lipoylation via endogenous pathway; protein N(6)-(lipoyl)lysine from octanoyl-[acyl-carrier-protein]: step 1/2. Functionally, catalyzes the transfer of endogenously produced octanoic acid from octanoyl-acyl-carrier-protein onto the lipoyl domains of lipoate-dependent enzymes. Lipoyl-ACP can also act as a substrate although octanoyl-ACP is likely to be the physiological substrate. The polypeptide is Octanoyltransferase (Thermoanaerobacter sp. (strain X514)).